The sequence spans 524 residues: Cytochrome P450 4F11 (524 aa).

The helical transmembrane segment at 15–37 (AASPWLLLLLVGGSWLLARVLAW) threads the bilayer. 4-hydroxynonenal-conjugated cysteine is present on residues C45 and C260. Residue H261 is modified to 4-hydroxynonenal-conjugated histidine. Residue E328 coordinates heme. H347 is subject to 4-hydroxynonenal-conjugated histidine. Residue C354 is modified to 4-hydroxynonenal-conjugated cysteine. K451 carries the 4-hydroxynonenal-conjugated lysine modification. C468 contacts heme.

This sequence belongs to the cytochrome P450 family. Heme serves as cofactor. Post-translationally, 4-hydroxynonenal conjugation impairs substrate binding and the long-chain fatty acid omega-monooxygenase activity. As to expression, expressed mainly in human liver, followed by kidney, heart, and skeletal muscle.

It is found in the endoplasmic reticulum membrane. Its subcellular location is the microsome membrane. It carries out the reaction an organic molecule + reduced [NADPH--hemoprotein reductase] + O2 = an alcohol + oxidized [NADPH--hemoprotein reductase] + H2O + H(+). The catalysed reaction is an omega-methyl-long-chain fatty acid + reduced [NADPH--hemoprotein reductase] + O2 = an omega-hydroxy-long-chain fatty acid + oxidized [NADPH--hemoprotein reductase] + H2O + H(+). The enzyme catalyses dodecanoate + reduced [NADPH--hemoprotein reductase] + O2 = 12-hydroxydodecanoate + oxidized [NADPH--hemoprotein reductase] + H2O + H(+). It catalyses the reaction hexadecanoate + reduced [NADPH--hemoprotein reductase] + O2 = 16-hydroxyhexadecanoate + oxidized [NADPH--hemoprotein reductase] + H2O + H(+). It carries out the reaction (9Z)-octadecenoate + reduced [NADPH--hemoprotein reductase] + O2 = 18-hydroxy-(9Z)-octadecenoate + oxidized [NADPH--hemoprotein reductase] + H2O + H(+). The catalysed reaction is (5Z,8Z,11Z,14Z)-eicosatetraenoate + reduced [NADPH--hemoprotein reductase] + O2 = 20-hydroxy-(5Z,8Z,11Z,14Z)-eicosatetraenoate + oxidized [NADPH--hemoprotein reductase] + H2O + H(+). The enzyme catalyses (4Z,7Z,10Z,13Z,16Z,19Z)-docosahexaenoate + reduced [NADPH--hemoprotein reductase] + O2 = 22-hydroxy-(4Z,7Z,10Z,13Z,16Z,19Z)-docosahexaenoate + oxidized [NADPH--hemoprotein reductase] + H2O + H(+). It catalyses the reaction 8-hydroxy-(5Z,9E,11Z,14Z)-eicosatetraenoate + reduced [NADPH--hemoprotein reductase] + O2 = 8,20-dihydroxy-(5Z,9E,11Z,14Z)-eicosatetraenoate + oxidized [NADPH--hemoprotein reductase] + H2O + H(+). It carries out the reaction 3-hydroxyhexadecanoate + reduced [NADPH--hemoprotein reductase] + O2 = 3,16-dihydroxyhexadecanoate + oxidized [NADPH--hemoprotein reductase] + H2O + H(+). The catalysed reaction is 3-hydroxyoctadecanoate + reduced [NADPH--hemoprotein reductase] + O2 = 3,18-dihydroxyoctadecanoate + oxidized [NADPH--hemoprotein reductase] + H2O + H(+). The enzyme catalyses phylloquinone + reduced [NADPH--hemoprotein reductase] + O2 = omega-hydroxyphylloquinone + oxidized [NADPH--hemoprotein reductase] + H2O + H(+). It catalyses the reaction menaquinone-4 + reduced [NADPH--hemoprotein reductase] + O2 = omega-hydroxymenaquinone-4 + oxidized [NADPH--hemoprotein reductase] + H2O + H(+). It carries out the reaction 2-hexyl-5-pentylresorcinol + reduced [NADPH--hemoprotein reductase] + O2 = 2-hexyl-5-(5-hydroxypentyl)resorcinol + oxidized [NADPH--hemoprotein reductase] + H2O + H(+). The catalysed reaction is 2-hexyl-5-heptylresorcinol + reduced [NADPH--hemoprotein reductase] + O2 = 2-hexyl-5-(7-hydroxyheptyl)resorcinol + oxidized [NADPH--hemoprotein reductase] + H2O + H(+). The enzyme catalyses 12-hydroxy-(5Z,8Z,10E,14Z)-eicosatetraenoate + reduced [NADPH--hemoprotein reductase] + O2 = 12,20-dihydroxy-(5Z,8Z,10E,14Z)-eicosatetraenoate + oxidized [NADPH--hemoprotein reductase] + H2O + H(+). It catalyses the reaction 15-hydroxy-(5Z,8Z,11Z,13E)-eicosatetraenoate + reduced [NADPH--hemoprotein reductase] + O2 = 15,20-dihydroxy-(5Z,8Z,11Z,13E)-eicosatetraenoate + oxidized [NADPH--hemoprotein reductase] + H2O + H(+). The protein operates within lipid metabolism; arachidonate metabolism. It participates in lipid metabolism; oxylipin biosynthesis. It functions in the pathway cofactor degradation; phylloquinone degradation. Its pathway is xenobiotic degradation. With respect to regulation, inhibition of the long-chain fatty acid omega-monooxygenase activity by 4-hydroxynonenal (4-HNE) conjugation. Its function is as follows. A cytochrome P450 monooxygenase involved in the metabolism of various endogenous substrates, including fatty acids and their oxygenated derivatives (oxylipins). Mechanistically, uses molecular oxygen inserting one oxygen atom into a substrate, and reducing the second into a water molecule, with two electrons provided by NADPH via cytochrome P450 reductase (CPR; NADPH-ferrihemoprotein reductase). Catalyzes with high efficiency the oxidation of the terminal carbon (omega-oxidation) of 3-hydroxy fatty acids, such as 3-hydroxyhexadecanoic and 3-hydroxyoctadecanoic acids, likely participating in the biosynthesis of long-chain 3-hydroxydicarboxylic acids. Omega-hydroxylates and inactivates phylloquinone (vitamin K1), and menaquinone-4 (MK-4, a form of vitamin K2), both acting as cofactors in blood coagulation. Metabolizes with low efficiciency fatty acids, including (5Z,8Z,11Z,14Z)-eicosatetraenoic acid (arachidonate) and its oxygenated metabolite 8-hydroxyeicosatetraenoic acid (8-HETE). Catalyzes N- and O-demethylation of drugs such as erythromycin, benzphetamine, ethylmorphine, chlorpromazine, imipramine and verapamil. Catalyzes the oxidation of dialkylresorcinol 2. This Homo sapiens (Human) protein is Cytochrome P450 4F11.